We begin with the raw amino-acid sequence, 316 residues long: Apolipoprotein E (316 aa).

An N-terminal signal peptide occupies residues 1–18 (MKVLWVALVVALLAGCQA). 8 tandem repeats follow at residues 79-100 (VLME…GQLA), 101-122 (PMAQ…ARLG), 123-144 (SDME…AMLG), 145-166 (QSTE…KRLL), 167-188 (RDAD…EGAE), 189-210 (RSVS…SRAA), 211-232 (TLST…QKLH), and 233-254 (GRLE…QQLE). The interval 79–254 (VLMEETMKEV…RLDKMRQQLE (176 aa)) is 8 X 22 AA approximate tandem repeats. Methionine sulfoxide is present on methionine 142. Phosphoserine is present on serine 146. The segment at 157–167 (HLRKLRKRLLR) is LDL and other lipoprotein receptors binding. 161 to 164 (LRKR) contributes to the heparin binding site. Residues 209-289 (AATLSTQVGQ…SWFEPLVEDM (81 aa)) form a lipid-binding and lipoprotein association region. 228–235 (RQKLHGRL) provides a ligand contact to heparin. The interval 265–316 (SQIRLQAEAFQARLRSWFEPLVEDMQRQWAGLVEKVQLALHLSPTSPPSENH) is homooligomerization. The segment at 277-289 (RLRSWFEPLVEDM) is specificity for association with VLDL.

Belongs to the apolipoprotein A1/A4/E family. As to quaternary structure, homotetramer. May interact with ABCA1; functionally associated with ABCA1 in the biogenesis of HDLs. May interact with APP/A4 amyloid-beta peptide; the interaction is extremely stable in vitro but its physiological significance is unclear. May interact with MAPT. May interact with MAP2. In the cerebrospinal fluid, interacts with secreted SORL1. Interacts with PMEL; this allows the loading of PMEL luminal fragment on ILVs to induce fibril nucleation. Post-translationally, APOE exists as multiple glycosylated and sialylated glycoforms within cells and in plasma. The extent of glycosylation and sialylation are tissue and context specific. In terms of processing, glycated in plasma VLDL. Phosphorylated by FAM20C in the extracellular medium.

It is found in the secreted. It localises to the extracellular space. The protein resides in the extracellular matrix. Its subcellular location is the extracellular vesicle. The protein localises to the endosome. It is found in the multivesicular body. Functionally, APOE is an apolipoprotein, a protein associating with lipid particles, that mainly functions in lipoprotein-mediated lipid transport between organs via the plasma and interstitial fluids. APOE is a core component of plasma lipoproteins and is involved in their production, conversion and clearance. Apolipoproteins are amphipathic molecules that interact both with lipids of the lipoprotein particle core and the aqueous environment of the plasma. As such, APOE associates with chylomicrons, chylomicron remnants, very low density lipoproteins (VLDL) and intermediate density lipoproteins (IDL) but shows a preferential binding to high-density lipoproteins (HDL). It also binds a wide range of cellular receptors including the LDL receptor/LDLR and the very low-density lipoprotein receptor/VLDLR that mediate the cellular uptake of the APOE-containing lipoprotein particles. Finally, APOE also has a heparin-binding activity and binds heparan-sulfate proteoglycans on the surface of cells, a property that supports the capture and the receptor-mediated uptake of APOE-containing lipoproteins by cells. This chain is Apolipoprotein E (APOE), found in Ovis aries (Sheep).